We begin with the raw amino-acid sequence, 340 residues long: GTP 3',8-cyclase (340 aa).

A Radical SAM core domain is found at 8-227; sequence KLGRPIRDLR…TMIEQHFEID (220 aa). Arg17 lines the GTP pocket. Residues Cys24 and Cys28 each contribute to the [4Fe-4S] cluster site. Position 30 (Tyr30) interacts with S-adenosyl-L-methionine. Cys31 lines the [4Fe-4S] cluster pocket. Position 71 (Arg71) interacts with GTP. Gly75 serves as a coordination point for S-adenosyl-L-methionine. Thr102 is a GTP binding site. Residue Ser126 coordinates S-adenosyl-L-methionine. Lys163 contributes to the GTP binding site. Met197 provides a ligand contact to S-adenosyl-L-methionine. Residues Cys261 and Cys264 each coordinate [4Fe-4S] cluster. A GTP-binding site is contributed by 266–268; that stretch reads RAR. Cys278 contacts [4Fe-4S] cluster.

The protein belongs to the radical SAM superfamily. MoaA family. In terms of assembly, monomer and homodimer. Requires [4Fe-4S] cluster as cofactor.

It carries out the reaction GTP + AH2 + S-adenosyl-L-methionine = (8S)-3',8-cyclo-7,8-dihydroguanosine 5'-triphosphate + 5'-deoxyadenosine + L-methionine + A + H(+). It functions in the pathway cofactor biosynthesis; molybdopterin biosynthesis. Catalyzes the cyclization of GTP to (8S)-3',8-cyclo-7,8-dihydroguanosine 5'-triphosphate. The sequence is that of GTP 3',8-cyclase from Staphylococcus aureus (strain Mu3 / ATCC 700698).